The primary structure comprises 566 residues: Proline--tRNA ligase (566 aa).

Belongs to the class-II aminoacyl-tRNA synthetase family. ProS type 1 subfamily. In terms of assembly, homodimer.

The protein localises to the cytoplasm. The enzyme catalyses tRNA(Pro) + L-proline + ATP = L-prolyl-tRNA(Pro) + AMP + diphosphate. In terms of biological role, catalyzes the attachment of proline to tRNA(Pro) in a two-step reaction: proline is first activated by ATP to form Pro-AMP and then transferred to the acceptor end of tRNA(Pro). As ProRS can inadvertently accommodate and process non-cognate amino acids such as alanine and cysteine, to avoid such errors it has two additional distinct editing activities against alanine. One activity is designated as 'pretransfer' editing and involves the tRNA(Pro)-independent hydrolysis of activated Ala-AMP. The other activity is designated 'posttransfer' editing and involves deacylation of mischarged Ala-tRNA(Pro). The misacylated Cys-tRNA(Pro) is not edited by ProRS. This chain is Proline--tRNA ligase, found in Bacillus cytotoxicus (strain DSM 22905 / CIP 110041 / 391-98 / NVH 391-98).